We begin with the raw amino-acid sequence, 332 residues long: Anthranilate phosphoribosyltransferase (332 aa).

5-phospho-alpha-D-ribose 1-diphosphate contacts are provided by residues Gly-79, 82–83 (GD), Thr-87, 89–92 (NIST), 107–115 (KHGNYGATS), and Ala-119. Gly-79 lines the anthranilate pocket. Ser-91 provides a ligand contact to Mg(2+). Asn-110 lines the anthranilate pocket. Anthranilate is bound at residue Arg-165. Mg(2+) contacts are provided by Asp-223 and Glu-224.

Belongs to the anthranilate phosphoribosyltransferase family. In terms of assembly, homodimer. The cofactor is Mg(2+).

It carries out the reaction N-(5-phospho-beta-D-ribosyl)anthranilate + diphosphate = 5-phospho-alpha-D-ribose 1-diphosphate + anthranilate. Its pathway is amino-acid biosynthesis; L-tryptophan biosynthesis; L-tryptophan from chorismate: step 2/5. Functionally, catalyzes the transfer of the phosphoribosyl group of 5-phosphorylribose-1-pyrophosphate (PRPP) to anthranilate to yield N-(5'-phosphoribosyl)-anthranilate (PRA). The chain is Anthranilate phosphoribosyltransferase from Bacteroides thetaiotaomicron (strain ATCC 29148 / DSM 2079 / JCM 5827 / CCUG 10774 / NCTC 10582 / VPI-5482 / E50).